We begin with the raw amino-acid sequence, 237 residues long: Uracil-DNA glycosylase (237 aa).

Aspartate 77 serves as the catalytic Proton acceptor.

It belongs to the uracil-DNA glycosylase (UDG) superfamily. UNG family.

It localises to the cytoplasm. It catalyses the reaction Hydrolyzes single-stranded DNA or mismatched double-stranded DNA and polynucleotides, releasing free uracil.. In terms of biological role, excises uracil residues from the DNA which can arise as a result of misincorporation of dUMP residues by DNA polymerase or due to deamination of cytosine. The polypeptide is Uracil-DNA glycosylase (Acinetobacter baumannii (strain SDF)).